Consider the following 519-residue polypeptide: Exodeoxyribonuclease 7 large subunit (519 aa).

The tract at residues valine 500–leucine 519 is disordered.

The protein belongs to the XseA family. In terms of assembly, heterooligomer composed of large and small subunits.

It localises to the cytoplasm. The catalysed reaction is Exonucleolytic cleavage in either 5'- to 3'- or 3'- to 5'-direction to yield nucleoside 5'-phosphates.. Its function is as follows. Bidirectionally degrades single-stranded DNA into large acid-insoluble oligonucleotides, which are then degraded further into small acid-soluble oligonucleotides. The chain is Exodeoxyribonuclease 7 large subunit from Cereibacter sphaeroides (strain KD131 / KCTC 12085) (Rhodobacter sphaeroides).